Here is a 379-residue protein sequence, read N- to C-terminus: Sulfate adenylyltransferase (379 aa).

This sequence belongs to the sulfate adenylyltransferase family.

The enzyme catalyses sulfate + ATP + H(+) = adenosine 5'-phosphosulfate + diphosphate. Its pathway is sulfur metabolism; hydrogen sulfide biosynthesis; sulfite from sulfate: step 1/3. In Thermococcus onnurineus (strain NA1), this protein is Sulfate adenylyltransferase.